The primary structure comprises 1098 residues: MAHAGSGGSAGRGFGGSRWGRSGSGGHEKLPVHVEDALTYLDQVKIRFGSDPATYNGFLEIMKEFKSQSIDTPGVIRRVSQLFHEHPDLIVGFNAFLPLGYRIDIPKNGKLNIQSPLSSQDNSHSHGDCGEDFKQMSYKEDRGQVPLESDSVEFNNAISYVNKIKTRFLDHPEIYRSFLEILHTYQKEQLHTKGRPFRGMSEEEVFTEVANLFRGQEDLLSEFGQFLPEAKRSLFTGNGSCEMNSGQKNEEKSLEHNKKRSRPSLLRPVSAPAKKKMKLRGTKDLSIAAVGKYGTLQEFSFFDKVRRVLKSQEVYENFLRCIALFNQELVSGSELLQLVSPFLGKFPELFAQFKSFLGVKELSFAPPMSDRSGDGISREIDYASCKRIGSSYRALPKTYQQPKCSGRTAICKEVLNDTWVSFPSWSEDSTFVSSKKTPYEEQLHRCEDERFELDVVLETNLATIRVLESVQKKLSRMAPEDQEKLRLDDCLGGTSEVIQRRAIHRIYGDKAPEVIESLKRNPATAVPVVLKRLKAKEEEWREAQQGFNKIWREQYEKAYLKSLDHQAVNFKQNDTKALRSKSLLNEIESVYDEHQEQHSEGRSAPSSEPHLIFVYEDRQILEDAAALISYYVKRQPAIQKEDQGTIRQLLHRFLPSLFFSQQCPGTSDDSADERDRDRDSAEPERRRPTDEKPPADASPEPPKVLDDVYSLFFANNNWYFFLRLHQTLCARLLKIYRQAQKQLLEHRREQEREQLLCEGRREKAADPAMELRLKQPSEVELEEYYPAFLDMVRSLLEGSIDPTQYEDTLREMFTIHAYIGFTMDKLVQNIARQLHHLVSDDVCLKVVELYLNEQQRGAAGGNLSSRCVRAARETSYQWKAERCMADENCFKVMFLQRRGQVIMTIELLDTEEAQTEDPVEVQHLARYVEQYVGSEGASSSSTEGFLLKPVFLQRNLKKFRRWQCEQVRAMRGEAKSSWKRLMGVESACDVDCRFRLGTHKMVFIVNSEDYMYRRGTLCRAKQVQPLVLLRHHRHFEEWHGRWLEDNVTVAAAGLVQDWLMGEEEEDMVPCKTLCETAHVHGLPVTRYRVQYSRRPASP.

The segment covering 1 to 25 (MAHAGSGGSAGRGFGGSRWGRSGSG) has biased composition (gly residues). Residues 1–26 (MAHAGSGGSAGRGFGGSRWGRSGSGG) form a disordered region. Residues 1 to 299 (MAHAGSGGSA…VGKYGTLQEF (299 aa)) form an interaction with CRY1 region. 2 consecutive PAH domains span residues 30–100 (LPVH…LPLG) and 145–230 (VPLE…LPEA). Positions 52–98 (PATYNGFLEIMKEFKSQSIDTPGVIRRVSQLFHEHPDLIVGFNAFLP) are interaction with REST. A compositionally biased stretch (polar residues) spans 238–247 (NGSCEMNSGQ). The interval 238-274 (NGSCEMNSGQKNEEKSLEHNKKRSRPSLLRPVSAPAK) is disordered. The segment at 275 to 499 (KKMKLRGTKD…CLGGTSEVIQ (225 aa)) is interaction with NCOR1. Residues 283 to 360 (KDLSIAAVGK…AQFKSFLGVK (78 aa)) enclose the PAH 3 domain. The tract at residues 383 to 550 (ASCKRIGSSY…REAQQGFNKI (168 aa)) is interaction with SUDS3 and HDAC1. Positions 661-702 (QQCPGTSDDSADERDRDRDSAEPERRRPTDEKPPADASPEPP) are disordered. 2 positions are modified to phosphoserine: serine 667 and serine 670. Basic and acidic residues predominate over residues 673 to 694 (ERDRDRDSAEPERRRPTDEKPP).

As to quaternary structure, component of the SIN3B complex, which includes SIN3B, HDAC2 or HDAC1, PHF12 and MORF4L1. Interacts with FOXK1/MNF, MXI, MAD, NCOR1 and SAP30. Interaction with SUDS3 enhances the interaction with HDAC1 to form a complex. Interacts with CRY1, HCFC1, MAD3, MAD4, MAEL, REST, RNF220 and SETDB1. Interacts with C6orf89. Interacts with MYT1L. Post-translationally, ubiquitinated by RNF220 that leads to proteasomal degradation.

It localises to the nucleus. Its function is as follows. Acts as a transcriptional repressor. Interacts with MXI1 to repress MYC responsive genes and antagonize MYC oncogenic activities. Interacts with MAD-MAX heterodimers by binding to MAD. The heterodimer then represses transcription by tethering SIN3B to DNA. Also forms a complex with FOXK1 which represses transcription. With FOXK1, regulates cell cycle progression probably by repressing cell cycle inhibitor genes expression. As part of the SIN3B complex represses transcription and counteracts the histone acetyltransferase activity of EP300 through the recognition H3K27ac marks by PHF12 and the activity of the histone deacetylase HDAC2. SIN3B complex is recruited downstream of the constitutively active genes transcriptional start sites through interaction with histones and mitigates histone acetylation and RNA polymerase II progression within transcribed regions contributing to the regulation of transcription. This Mus musculus (Mouse) protein is Paired amphipathic helix protein Sin3b (Sin3b).